A 304-amino-acid polypeptide reads, in one-letter code: m7GpppX diphosphatase (304 aa).

Substrate is bound by residues E152, K174, and 235-246 (HYLPSYYHLHVH). A Histidine triad motif motif is present at residues 242-246 (HLHVH). The active-site Nucleophile is the H244.

It belongs to the HIT family.

It localises to the cytoplasm. It is found in the nucleus. It catalyses the reaction a 5'-end (N(7)-methyl 5'-triphosphoguanosine)-ribonucleoside in mRNA + H2O = N(7)-methyl-GMP + a 5'-end diphospho-ribonucleoside in mRNA + 2 H(+). Its function is as follows. Decapping scavenger enzyme that catalyzes the cleavage of a residual cap structure following the degradation of mRNAs by the 3'-&gt;5' exosome-mediated mRNA decay pathway. Hydrolyzes cap analog structures like 7-methylguanosine nucleoside triphosphate (m7GpppG) with up to 10 nucleotide substrates (small capped oligoribonucleotides) and specifically releases 5'-phosphorylated RNA fragments and 7-methylguanosine monophosphate (m7GMP). Has no activity towards mRNA molecules longer than 25 nucleotides. May also play a role in the 5'-&gt;3 mRNA decay pathway; m7GDP, the downstream product released by the 5'-&gt;3' mRNA mediated decapping activity, may be also converted by DCS1 to m7GMP. Inhibits mRNA translation. Binds to the m7GpppG cap analog. This Schizosaccharomyces pombe (strain 972 / ATCC 24843) (Fission yeast) protein is m7GpppX diphosphatase (nhm1).